We begin with the raw amino-acid sequence, 291 residues long: Lipoyl synthase (291 aa).

7 residues coordinate [4Fe-4S] cluster: Cys-35, Cys-40, Cys-46, Cys-61, Cys-65, Cys-68, and Ser-273. In terms of domain architecture, Radical SAM core spans 47–262 (FGKRQATFLI…KEKALAMGFE (216 aa)).

This sequence belongs to the radical SAM superfamily. Lipoyl synthase family. [4Fe-4S] cluster serves as cofactor.

It localises to the cytoplasm. The enzyme catalyses [[Fe-S] cluster scaffold protein carrying a second [4Fe-4S](2+) cluster] + N(6)-octanoyl-L-lysyl-[protein] + 2 oxidized [2Fe-2S]-[ferredoxin] + 2 S-adenosyl-L-methionine + 4 H(+) = [[Fe-S] cluster scaffold protein] + N(6)-[(R)-dihydrolipoyl]-L-lysyl-[protein] + 4 Fe(3+) + 2 hydrogen sulfide + 2 5'-deoxyadenosine + 2 L-methionine + 2 reduced [2Fe-2S]-[ferredoxin]. Its pathway is protein modification; protein lipoylation via endogenous pathway; protein N(6)-(lipoyl)lysine from octanoyl-[acyl-carrier-protein]: step 2/2. Its function is as follows. Catalyzes the radical-mediated insertion of two sulfur atoms into the C-6 and C-8 positions of the octanoyl moiety bound to the lipoyl domains of lipoate-dependent enzymes, thereby converting the octanoylated domains into lipoylated derivatives. The polypeptide is Lipoyl synthase (Geobacter sp. (strain M21)).